The primary structure comprises 136 residues: Small ribosomal subunit protein uS9 (136 aa).

This sequence belongs to the universal ribosomal protein uS9 family.

The polypeptide is Small ribosomal subunit protein uS9 (Borreliella burgdorferi (strain ZS7) (Borrelia burgdorferi)).